A 368-amino-acid polypeptide reads, in one-letter code: L-arabinitol 4-dehydrogenase (368 aa).

Cysteine 52, histidine 77, glutamate 78, cysteine 107, cysteine 110, cysteine 113, cysteine 121, and glutamate 162 together coordinate Zn(2+). Residues aspartate 210, arginine 215, and isoleucine 282 each contribute to the NAD(+) site.

This sequence belongs to the zinc-containing alcohol dehydrogenase family. Homotetramer. The cofactor is Zn(2+).

It carries out the reaction L-arabinitol + NAD(+) = L-xylulose + NADH + H(+). Functionally, plays a key role in liamocins biosynthesis by providing the arabinol moity that is linked to 3,5-dihydroxydecanoic acid (provided by the HR-PKS PKS1) via ester bond formation catalyzed by the esterase EST1. The polypeptide is L-arabinitol 4-dehydrogenase (Aureobasidium melanogenum (Aureobasidium pullulans var. melanogenum)).